The sequence spans 523 residues: Probable lipid II flippase MurJ (523 aa).

12 consecutive transmembrane segments (helical) span residues 98-118, 146-166, 170-190, 201-221, 246-266, 284-304, 328-348, 360-380, 395-415, 422-442, 461-481, and 489-509; these read AFYS…IVYV, IMFG…ILNA, FGLP…FTFM, GLAW…AVAL, MLPG…NLYF, LLEL…LPTL, LFLA…IIEV, VQMT…VSCS, VPMV…PVLM, GLMI…MGLL, FVLA…LMAQ, and LALF…AYVL.

The protein belongs to the MurJ/MviN family.

Its subcellular location is the cell inner membrane. The protein operates within cell wall biogenesis; peptidoglycan biosynthesis. Its function is as follows. Involved in peptidoglycan biosynthesis. Transports lipid-linked peptidoglycan precursors from the inner to the outer leaflet of the cytoplasmic membrane. The sequence is that of Probable lipid II flippase MurJ from Bdellovibrio bacteriovorus (strain ATCC 15356 / DSM 50701 / NCIMB 9529 / HD100).